A 299-amino-acid polypeptide reads, in one-letter code: ATP phosphoribosyltransferase (299 aa).

It belongs to the ATP phosphoribosyltransferase family. Long subfamily. As to quaternary structure, equilibrium between an active dimeric form, an inactive hexameric form and higher aggregates. Interconversion between the various forms is largely reversible and is influenced by the natural substrates and inhibitors of the enzyme. Mg(2+) is required as a cofactor.

Its subcellular location is the cytoplasm. It carries out the reaction 1-(5-phospho-beta-D-ribosyl)-ATP + diphosphate = 5-phospho-alpha-D-ribose 1-diphosphate + ATP. Its pathway is amino-acid biosynthesis; L-histidine biosynthesis; L-histidine from 5-phospho-alpha-D-ribose 1-diphosphate: step 1/9. With respect to regulation, feedback inhibited by histidine. Functionally, catalyzes the condensation of ATP and 5-phosphoribose 1-diphosphate to form N'-(5'-phosphoribosyl)-ATP (PR-ATP). Has a crucial role in the pathway because the rate of histidine biosynthesis seems to be controlled primarily by regulation of HisG enzymatic activity. The protein is ATP phosphoribosyltransferase of Escherichia coli O8 (strain IAI1).